The primary structure comprises 398 residues: Alpha-ketoglutarate-dependent dioxygenase bsc9 (398 aa).

H167 and D169 together coordinate Fe cation. T212 serves as a coordination point for 2-oxoglutarate. H365 provides a ligand contact to Fe cation. R377 lines the 2-oxoglutarate pocket.

This sequence belongs to the TfdA dioxygenase family. It depends on Fe(2+) as a cofactor.

Its pathway is mycotoxin biosynthesis. Alpha-ketoglutarate dependent dioxygenase; part of the gene cluster that mediates the biosynthesis of the diterpene glucoside brassicicene C. In the first step of the brassicicene C biosynthesis, the bifunctional diterpene synthase bsc8 that possesses both prenyl transferase and terpene cyclase activity, converts isopentenyl diphosphate and dimethylallyl diphosphate into geranylgeranyl diphosphate (GGDP) that is further converted into fusicocca-2,10(14)-diene, the first precursor for brassicicene C. Fusicocca-2,10(14)-diene is then substrate of cytochrome P450 monooxygenase bsc1 for hydroxylation at the C-8 position. Oxidation at C-16 position to aldehyde is then catalyzed by the cytochrome P450 monooyxygenase bsc7, yielding fusicocca-2,10(14)-diene-8-beta,16-diol. Follows the isomerization of the double bond and reduction of aldehyde to alcohol catalyzed by the short-chain dehydrogenase/reductase bsc3 to yield the diol compound fusicocca-1,10(14)-diene-8 beta,16-diol. The next step is the oxidation at the C-3 position of fusicocca-2,10(14)-diene-8-beta,16-diol catalyzed by the alpha-ketoglutarate dependent dioxygenase bsc9, to produce a triol compound. Methylation of the hydroxy group at position 16 is performed by the methyltransferase bsc6. 16-O-methylation is followed by oxidation at the C-13 position to ketone and an alkyl shift of the methyl group leads to brassicicene C. Although the probable acetyltransferase bsc4 is included in the gene cluster, no acetylation reactions are necessary for brassicicene C biosynthesis. However, the fact that brassicicene E, which is a structurally related compound having an acetoxy group at position 12, was previously isolated from another strain of A.brassicicola suggests that the ATCC 96836 strain might also produce a small amount of brassicicene E. The polypeptide is Alpha-ketoglutarate-dependent dioxygenase bsc9 (Alternaria brassicicola (Dark leaf spot agent)).